A 276-amino-acid polypeptide reads, in one-letter code: Bifunctional protein FolD 1 (276 aa).

Residues 161–163, Ser186, and Thr227 contribute to the NADP(+) site; that span reads GRG.

Belongs to the tetrahydrofolate dehydrogenase/cyclohydrolase family. As to quaternary structure, homodimer.

The catalysed reaction is (6R)-5,10-methylene-5,6,7,8-tetrahydrofolate + NADP(+) = (6R)-5,10-methenyltetrahydrofolate + NADPH. It catalyses the reaction (6R)-5,10-methenyltetrahydrofolate + H2O = (6R)-10-formyltetrahydrofolate + H(+). The protein operates within one-carbon metabolism; tetrahydrofolate interconversion. Functionally, catalyzes the oxidation of 5,10-methylenetetrahydrofolate to 5,10-methenyltetrahydrofolate and then the hydrolysis of 5,10-methenyltetrahydrofolate to 10-formyltetrahydrofolate. The chain is Bifunctional protein FolD 1 from Frankia casuarinae (strain DSM 45818 / CECT 9043 / HFP020203 / CcI3).